The primary structure comprises 1620 residues: Probable serine/threonine-protein kinase gdt4 (1620 aa).

The signal sequence occupies residues 1-19 (MKLEQRIFFLICLVINSFS). Topologically, residues 20–891 (NCSLLVAPDG…EVIGINEQLN (872 aa)) are extracellular. The helical transmembrane segment at 892–912 (ILAIVLPITISLFAAASILAG) threads the bilayer. The Cytoplasmic portion of the chain corresponds to 913 to 1620 (YLVIKKYKKP…AKRNKKNQNQ (708 aa)). One can recognise a Protein kinase domain in the interval 1349–1604 (IVLEKYLSEG…TLIDLLEKLL (256 aa)). Residues 1355–1363 (LSEGSFGVV) and Lys1376 contribute to the ATP site. Asp1466 acts as the Proton acceptor in catalysis.

It in the N-terminal section; belongs to the GDT family. This sequence in the C-terminal section; belongs to the protein kinase superfamily. TKL Ser/Thr protein kinase family.

Its subcellular location is the membrane. It catalyses the reaction L-seryl-[protein] + ATP = O-phospho-L-seryl-[protein] + ADP + H(+). The catalysed reaction is L-threonyl-[protein] + ATP = O-phospho-L-threonyl-[protein] + ADP + H(+). The sequence is that of Probable serine/threonine-protein kinase gdt4 (gdt4) from Dictyostelium discoideum (Social amoeba).